The primary structure comprises 842 residues: Taste receptor type 1 member 1 (842 aa).

The signal sequence occupies residues 1–19 (MLFWAAHLLLSLQLAVAYC). Topologically, residues 20–568 (WAFSCQRTES…EFLGWHEPIS (549 aa)) are extracellular. N-linked (GlcNAc...) asparagine glycans are attached at residues Asn88, Asn89, Asn96, Asn136, Asn292, Asn480, and Asn530. Residues 569–589 (LVLLAANTLLLLLLIGTAGLF) traverse the membrane as a helical segment. Residues 590-604 (AWRLHTPVVRSAGGR) are Cytoplasmic-facing. Residues 605-625 (LCFLMLGSLVAGSCSLYSFFG) form a helical membrane-spanning segment. At 626–640 (KPTVPACLLRQPLFS) the chain is on the extracellular side. The helical transmembrane segment at 641–661 (LGFAIFLSCLTIRSFQLVIIF) threads the bilayer. Over 662-681 (KFSTKVPTFYHTWAQNHGAG) the chain is Cytoplasmic. A helical membrane pass occupies residues 682–702 (IFVIVSSTVHLFLCLTWLAMW). Over 703 to 725 (TPRPTREYQRFPHLVILECTEVN) the chain is Extracellular. The chain crosses the membrane as a helical span at residues 726–746 (SVGFLVAFAHNILLSISTFVC). Over 747–762 (SYLGKELPENYNEAKC) the chain is Cytoplasmic. The chain crosses the membrane as a helical span at residues 763–783 (VTFSLLLHFVSWIAFFTMSSI). The Extracellular portion of the chain corresponds to 784–789 (YQGSYL). The chain crosses the membrane as a helical span at residues 790–810 (PAVNVLAGLATLSGGFSGYFL). Topologically, residues 811-842 (PKCYVILCRPELNNTEHFQASIQDYTRRCGTT) are cytoplasmic.

Belongs to the G-protein coupled receptor 3 family. TAS1R subfamily. Forms heterodimers with TAS1R3. Expressed strongly only in fungiform papillae.

Its subcellular location is the cell membrane. In terms of biological role, putative taste receptor. TAS1R1/TAS1R3 responds to the umami taste stimulus (the taste of monosodium glutamate) and also to most of the 20 standard L-amino acids, but not to their D-enantiomers or other compounds. Sequence differences within and between species can significantly influence the selectivity and specificity of taste responses. The protein is Taste receptor type 1 member 1 (Tas1r1) of Mus musculus (Mouse).